We begin with the raw amino-acid sequence, 338 residues long: MINPRVFFDIDVDGNRIGRIVIELFADQVPKTAENFRALCTGEKGIGKVSNMPLHYKGSIFHRIIKGFMCQGGDFTHRTGKGGESIYGANFPDESFSRKHDTHGLLSMANRGPNTQTSQFFITTRPTPHLDGKHVVFGRVVSGYNVVEMMENEPVDDQDRPLHNVMIANCGELVLKLPPGALLKKASAVSDESEDEIKNRKRSRSSDDDSSSDEDSEEEERKRTKKKRSRKHSKKDKKKKKRESSNRKRSPEANRHVSRERRDISREKRDNSRERRLSRKEDDRRSPSDKRKEDRRSLSPEKRSSERRVARPVRPRLNYNDPNVEVKGRGRFKYRPTY.

Residues 7-172 form the PPIase cyclophilin-type domain; sequence FFDIDVDGNR…HNVMIANCGE (166 aa). The tract at residues 186 to 338 is disordered; it reads ASAVSDESED…RGRFKYRPTY (153 aa). Residues 208–218 are compositionally biased toward acidic residues; sequence DDSSSDEDSEE. A compositionally biased stretch (basic residues) spans 223–242; sequence RTKKKRSRKHSKKDKKKKKR. Over residues 243-309 the composition is skewed to basic and acidic residues; it reads ESSNRKRSPE…PEKRSSERRV (67 aa). Residues 329–338 are compositionally biased toward basic residues; the sequence is RGRFKYRPTY.

Belongs to the cyclophilin-type PPIase family.

The catalysed reaction is [protein]-peptidylproline (omega=180) = [protein]-peptidylproline (omega=0). Functionally, PPIases accelerate the folding of proteins. It catalyzes the cis-trans isomerization of proline imidic peptide bonds in oligopeptides. In Rhizopus delemar (strain RA 99-880 / ATCC MYA-4621 / FGSC 9543 / NRRL 43880) (Mucormycosis agent), this protein is Peptidyl-prolyl cis-trans isomerase cyp11 (cyp11).